Here is a 709-residue protein sequence, read N- to C-terminus: MLLLQQPPLVSTRFHSLYFLTHHHHHHHRFFQPPISAFSATTSASLPSPSPSSSSSYFSSWNGLDTNEEEDNEFSSEVHRRYDFSPLLKFLSRFGPVELALDSESESEASPESLNPVEFDLVESYRAVPAPYWHSLIKSLTSSTSSLGLAYAVVSWLQKHNLCFSYELLYSILIHALGRSEKLYEAFLLSQKQTLTPLTYNALIGACARNNDIEKALNLIAKMRQDGYQSDFVNYSLVIQSLTRSNKIDSVMLLRLYKEIERDKLELDVQLVNDIIMGFAKSGDPSKALQLLGMAQATGLSAKTATLVSIISALADSGRTLEAEALFEELRQSGIKPRTRAYNALLKGYVKTGPLKDAESMVSEMEKRGVSPDEHTYSLLIDAYVNAGRWESARIVLKEMEAGDVQPNSFVFSRLLAGFRDRGEWQKTFQVLKEMKSIGVKPDRQFYNVVIDTFGKFNCLDHAMTTFDRMLSEGIEPDRVTWNTLIDCHCKHGRHIVAEEMFEAMERRGCLPCATTYNIMINSYGDQERWDDMKRLLGKMKSQGILPNVVTHTTLVDVYGKSGRFNDAIECLEEMKSVGLKPSSTMYNALINAYAQRGLSEQAVNAFRVMTSDGLKPSLLALNSLINAFGEDRRDAEAFAVLQYMKENGVKPDVVTYTTLMKALIRVDKFQKVPVVYEEMIMSGCKPDRKARSMLRSALRYMKQTLRAS.

The N-terminal 54 residues, 1-54 (MLLLQQPPLVSTRFHSLYFLTHHHHHHHRFFQPPISAFSATTSASLPSPSPSSS), are a transit peptide targeting the chloroplast. 14 PPR repeats span residues 196-230 (TPLT…GYQS), 231-267 (DFVN…KLEL), 268-302 (DVQL…GLSA), 303-337 (KTAT…GIKP), 338-372 (RTRA…GVSP), 373-407 (DEHT…DVQP), 408-442 (NSFV…GVKP), 443-477 (DRQF…GIEP), 478-512 (DRVT…GCLP), 513-547 (CATT…GILP), 548-582 (NVVT…GLKP), 583-617 (SSTM…GLKP), 618-652 (SLLA…GVKP), and 653-687 (DVVT…GCKP).

It belongs to the PPR family. P subfamily. In terms of assembly, interacts with PDE338.

It localises to the plastid. The protein resides in the chloroplast stroma. The protein localises to the chloroplast thylakoid. It is found in the chloroplast. In terms of biological role, required for chloroplast protein synthesis and accumulation of subunits of the thylakoid protein complexes. Activates psaC and petA translation by binding their 5'-UTRs. Required for the correct processing of petB and petD mRNAs. Interacts with the petB and petD intergenic region and is required for the generation of petB and petD monocistronic RNAs. This chain is Pentatricopeptide repeat-containing protein At5g42310, chloroplastic, found in Arabidopsis thaliana (Mouse-ear cress).